The following is a 409-amino-acid chain: Argininosuccinate synthase (409 aa).

An ATP-binding site is contributed by 9 to 17 (AYSGGLDTS). Tyr86 serves as a coordination point for L-citrulline. Gly116 lines the ATP pocket. Thr118, Asn122, and Asp123 together coordinate L-aspartate. Residue Asn122 participates in L-citrulline binding. L-citrulline is bound by residues Arg126, Ser174, Ser183, Glu259, and Tyr271.

The protein belongs to the argininosuccinate synthase family. Type 1 subfamily. In terms of assembly, homotetramer.

Its subcellular location is the cytoplasm. The catalysed reaction is L-citrulline + L-aspartate + ATP = 2-(N(omega)-L-arginino)succinate + AMP + diphosphate + H(+). Its pathway is amino-acid biosynthesis; L-arginine biosynthesis; L-arginine from L-ornithine and carbamoyl phosphate: step 2/3. This Halalkalibacterium halodurans (strain ATCC BAA-125 / DSM 18197 / FERM 7344 / JCM 9153 / C-125) (Bacillus halodurans) protein is Argininosuccinate synthase.